We begin with the raw amino-acid sequence, 743 residues long: Alpha-N-acetylglucosaminidase (743 aa).

The first 23 residues, 1 to 23 (MEAVAVAAAVGVLLLAGAGGAAG), serve as a signal peptide directing secretion. N-linked (GlcNAc...) asparagine glycans are attached at residues N261, N272, N435, N503, N526, and N532.

It belongs to the glycosyl hydrolase 89 family. As to quaternary structure, monomer and homodimer. In terms of tissue distribution, liver, ovary, peripheral blood leukocytes, testis, prostate, spleen, colon, lung, placenta and kidney.

It is found in the lysosome. The catalysed reaction is Hydrolysis of terminal non-reducing N-acetyl-D-glucosamine residues in N-acetyl-alpha-D-glucosaminides.. Functionally, involved in the degradation of heparan sulfate. This is Alpha-N-acetylglucosaminidase (NAGLU) from Homo sapiens (Human).